The following is an 87-amino-acid chain: Glutaredoxin (87 aa).

Residues 1 to 87 enclose the Glutaredoxin domain; sequence MFVVIFGRPG…LMKEQFGIVA (87 aa). Cys-11 and Cys-14 form a disulfide bridge.

It belongs to the glutaredoxin family. In terms of assembly, monomer.

It is found in the cytoplasm. Functionally, has a glutathione-disulfide oxidoreductase activity in the presence of NADPH and glutathione reductase. Reduces low molecular weight disulfides and proteins. The sequence is that of Glutaredoxin (grxA) from Haemophilus influenzae (strain ATCC 51907 / DSM 11121 / KW20 / Rd).